A 489-amino-acid polypeptide reads, in one-letter code: L-asparagine permease 1 (489 aa).

Helical transmembrane passes span 25-45 (QLQMIGIGGAIGTGLFLGASG), 49-69 (KAGPGLFLVYGVCGVFVFLIL), 100-120 (AVGWMYFLHWAMTSIVDTTAI), 137-157 (ILALIALTVVLSMNLISVEWF), 162-182 (FWAALIKVLALMAFLVVGTVF), 210-230 (WLPLLIVTSGVVFAYSAVELV), 255-275 (IAIFYVGSVALLALLLPYTAY), 289-309 (IGFHGAGDLMNIVVLTAALSS), 344-364 (YGGIVLTAVITLFGVALNAFK), 369-389 (FEIVLNMSALGIIAGWATIVL), 413-433 (SPYSGYLTLLFLLVVLVTMAS), and 439-459 (TWTVATLIIVIPALTAGWYLV).

The protein belongs to the amino acid-polyamine-organocation (APC) superfamily. Amino acid transporter (AAT) (TC 2.A.3.1) family.

It is found in the cell membrane. This Mycobacterium bovis (strain ATCC BAA-935 / AF2122/97) protein is L-asparagine permease 1 (ansP1).